The chain runs to 241 residues: Ribosome assembly factor mrt4 (241 aa).

The protein belongs to the universal ribosomal protein uL10 family. Associates with the pre-60S ribosomal particle.

It localises to the nucleus. The protein resides in the nucleolus. The protein localises to the cytoplasm. Component of the ribosome assembly machinery. Nuclear paralog of the ribosomal protein P0, it binds pre-60S subunits at an early stage of assembly in the nucleolus, and is replaced by P0 in cytoplasmic pre-60S subunits and mature 80S ribosomes. This Schizosaccharomyces pombe (strain 972 / ATCC 24843) (Fission yeast) protein is Ribosome assembly factor mrt4.